The primary structure comprises 333 residues: Mitochondrial glycine transporter (333 aa).

Solcar repeat units lie at residues 10–93 (SKST…IRQS), 125–209 (LSNT…GKKR), and 235–319 (HAAS…LIRR). Transmembrane regions (helical) follow at residues 16 to 41 (FAAGLGSGVLSAVLLQPIDLLKTRVQ) and 68 to 94 (GAVPSALRTGFGSAIYFTSLNAIRQSA). The tract at residues 98–126 (SPLPSSSSSTTTSSSTTTSSSSSSLPKLS) is disordered. 4 helical membrane-spanning segments follow: residues 131-156 (LLAGAAARSLAGLILMPLTVLKVRYE), 184-207 (GYGATAVRDAPYAGLYVLFYEQGK), 239-265 (INFASGVLAGVICSVVSNPFDAVKTRI), and 294-312 (GLALRMSRKAVSSALAWTV).

Belongs to the mitochondrial carrier (TC 2.A.29) family. SLC25A38 subfamily.

The protein resides in the mitochondrion inner membrane. It catalyses the reaction glycine(in) = glycine(out). Its function is as follows. Mitochondrial glycine transporter that imports glycine into the mitochondrial matrix. Plays an important role in providing glycine for the first enzymatic step in heme biosynthesis, the condensation of glycine with succinyl-CoA to produce 5-aminolevulinate (ALA) in the mitochondrial matrix. This Chaetomium globosum (strain ATCC 6205 / CBS 148.51 / DSM 1962 / NBRC 6347 / NRRL 1970) (Soil fungus) protein is Mitochondrial glycine transporter.